Consider the following 500-residue polypeptide: Ribose import ATP-binding protein RbsA (500 aa).

ABC transporter domains are found at residues 3-239 (IEMK…VGRE) and 246-493 (DRTP…TGGV). An ATP-binding site is contributed by 35 to 42 (GENGAGKS).

It belongs to the ABC transporter superfamily. Ribose importer (TC 3.A.1.2.1) family. In terms of assembly, the complex is composed of an ATP-binding protein (RbsA), two transmembrane proteins (RbsC) and a solute-binding protein (RbsB).

The protein resides in the cell membrane. It carries out the reaction D-ribose(out) + ATP + H2O = D-ribose(in) + ADP + phosphate + H(+). Its function is as follows. Part of the ABC transporter complex RbsABC involved in ribose import. Responsible for energy coupling to the transport system. The polypeptide is Ribose import ATP-binding protein RbsA (Lacticaseibacillus paracasei (strain ATCC 334 / BCRC 17002 / CCUG 31169 / CIP 107868 / KCTC 3260 / NRRL B-441) (Lactobacillus paracasei)).